The primary structure comprises 111 residues: MKDPYDVIKRHYVTEKAKTLEGLSLGSGEGKKKGSFCKHPKYTFIVACDATKPLIAQALESIYADKKVKVKSVNTICVKPQPARMFRGKRKGKTAGFKKAVVTFYEGHSIG.

Belongs to the universal ribosomal protein uL23 family. Part of the 50S ribosomal subunit. Contacts protein L29, and trigger factor when it is bound to the ribosome.

One of the early assembly proteins it binds 23S rRNA. One of the proteins that surrounds the polypeptide exit tunnel on the outside of the ribosome. Forms the main docking site for trigger factor binding to the ribosome. The protein is Large ribosomal subunit protein uL23 of Chlamydia felis (strain Fe/C-56) (Chlamydophila felis).